Reading from the N-terminus, the 615-residue chain is uncharacterized protein (615 aa).

Phosphoserine is present on Ser-48. Over residues 424-433 the composition is skewed to acidic residues; sequence DRENELEEGS. The segment at 424-615 is disordered; it reads DRENELEEGS…YARKKTKKNV (192 aa). Composition is skewed to basic and acidic residues over residues 439-476, 484-496, 504-521, and 529-561; these read DNER…KEVG, DGNK…KEVA, ESEK…KEVA, and ESEK…EPSK. 2 stretches are compositionally biased toward basic residues: residues 579–589 and 606–615; these read KKPKVVKKVAK and YARKKTKKNV.

This is an uncharacterized protein from Arabidopsis thaliana (Mouse-ear cress).